The following is a 460-amino-acid chain: Alpha-amylase (460 aa).

Residues 1 to 21 (MASRTLSGALALAAAATAVLA) form the signal peptide. Ca(2+)-binding residues include N121, Q167, and D176. Catalysis depends on D206, which acts as the Nucleophile. H210 provides a ligand contact to Ca(2+). E233 (proton donor) is an active-site residue.

This sequence belongs to the glycosyl hydrolase 13 family. Monomer. It depends on Ca(2+) as a cofactor.

The catalysed reaction is Endohydrolysis of (1-&gt;4)-alpha-D-glucosidic linkages in polysaccharides containing three or more (1-&gt;4)-alpha-linked D-glucose units.. The polypeptide is Alpha-amylase (amy) (Streptomyces thermoviolaceus).